The sequence spans 701 residues: Protein mono-ADP-ribosyltransferase PARP12 (701 aa).

3 consecutive C3H1-type zinc fingers follow at residues 94–119 (LCRF…HSLT), 150–179 (WLLP…IKLH), and 180–202 (ICQY…HDFS). The interval 234 to 268 (KNKSSAPSRVPPLFVPQGTSERKDSSGSVSPNTLS) is disordered. Ser-258 is subject to Phosphoserine. The segment covering 259–268 (SGSVSPNTLS) has biased composition (polar residues). C3H1-type zinc fingers lie at residues 270–297 (EEGD…HFHL) and 271–296 (EGDQ…VHFH). 2 consecutive WWE domains span residues 298-361 (PYRW…RLST) and 364-458 (SVTK…KVCR). An ADP-ribosylcysteine modification is found at Cys-474. One can recognise a PARP catalytic domain in the interval 484–698 (IPDYWDSSAL…ILLALGSLFS (215 aa)). ADP-ribosyl aspartic acid occurs at positions 600 and 611.

The protein belongs to the ARTD/PARP family. In terms of assembly, interacts with PARP11; this interaction plays a key role in zika virus suppression. Interacts with ISG15. Post-translationally, auto-mono-ADP-ribosylated. In terms of processing, phosphorylated by PRKD1.

The protein resides in the nucleus. Its subcellular location is the golgi apparatus. The protein localises to the trans-Golgi network. It localises to the cytoplasm. It is found in the stress granule. It carries out the reaction L-aspartyl-[protein] + NAD(+) = 4-O-(ADP-D-ribosyl)-L-aspartyl-[protein] + nicotinamide. The enzyme catalyses L-cysteinyl-[protein] + NAD(+) = S-(ADP-D-ribosyl)-L-cysteinyl-[protein] + nicotinamide + H(+). Its function is as follows. Mono-ADP-ribosyltransferase that mediates mono-ADP-ribosylation of target proteins. Acts as an antiviral factor by cooperating with PARP11 to suppress Zika virus replication. Displays anti-alphavirus activity during IFN-gamma immune activation by directly ADP-ribosylating the alphaviral non-structural proteins nsP3 and nsP4. Acts as a component of the PRKD1-driven regulatory cascade that selectively controls a major branch of the basolateral transport pathway by catalyzing the MARylation of GOLGA1. Acts also as a key regulator of mitochondrial function, protein translation, and inflammation. Inhibits PINK1/Parkin-dependent mitophagy and promotes cartilage degeneration by inhibiting the ubiquitination and SUMOylation of MFN1/2 by upregulating ISG15 and ISGylation. This Homo sapiens (Human) protein is Protein mono-ADP-ribosyltransferase PARP12.